Consider the following 192-residue polypeptide: Transmembrane protein 276 (192 aa).

Residues 1–32 (MVSKPRNEWSTALSHLVLAGVSLHAAVSSVQS) form the signal peptide. Transmembrane regions (helical) follow at residues 35-55 (GAAA…APEL), 63-83 (AGAW…FHWV), 92-112 (LLLG…PEGC), and 114-134 (VAGQ…AVFT).

The protein localises to the membrane. The chain is Transmembrane protein 276 from Rattus norvegicus (Rat).